The following is an 803-amino-acid chain: Lon protease (803 aa).

The 194-residue stretch at 9–202 (MPVLPLRDVV…YLLGMMESEA (194 aa)) folds into the Lon N-terminal domain. An ATP-binding site is contributed by 356–363 (GPPGVGKT). Positions 592 to 773 (QNRIGEVTGL…DEVLGFALEN (182 aa)) constitute a Lon proteolytic domain. Catalysis depends on residues serine 679 and lysine 722.

It belongs to the peptidase S16 family. In terms of assembly, homohexamer. Organized in a ring with a central cavity.

It localises to the cytoplasm. The catalysed reaction is Hydrolysis of proteins in presence of ATP.. Its function is as follows. ATP-dependent serine protease that mediates the selective degradation of mutant and abnormal proteins as well as certain short-lived regulatory proteins. Required for cellular homeostasis and for survival from DNA damage and developmental changes induced by stress. Degrades polypeptides processively to yield small peptide fragments that are 5 to 10 amino acids long. Binds to DNA in a double-stranded, site-specific manner. The sequence is that of Lon protease from Haemophilus influenzae (strain ATCC 51907 / DSM 11121 / KW20 / Rd).